Here is a 355-residue protein sequence, read N- to C-terminus: MSATPVTQLTPSSQPQQPCSPLLGASVTELTSWVQQQGQPAYRGKQLHDWIYHKGVRSLTDISVFSKQWRAAVADVPIGRSTIHHRSVASDGTVKYLLQLSDGEIVEAVGIPTDKRLTVCVSTQVGCPMACDFCATGKGGYKRNLERHEIVDQVLTVQEDFQQRVSHVVFMGMGEPLLNTENVLAGLRSLNQDVGIGQRSLTLSTVGIRDRISELAEHHLQVTLAVSLHAPNQALREQLIPSARSYHIEDLLAECREYVAITGRRISFEYILLAGVNDLPEHALELSKHLRGFQNHVNLIPYNSIDEVDYKRPSGDRIQAFLTVLQQQHIAVSVRYSRGLEADAACGQLRTKASR.

The disordered stretch occupies residues 1-20; sequence MSATPVTQLTPSSQPQQPCS. Catalysis depends on E107, which acts as the Proton acceptor. The 229-residue stretch at 113-341 folds into the Radical SAM core domain; sequence TDKRLTVCVS…VSVRYSRGLE (229 aa). The cysteines at positions 120 and 346 are disulfide-linked. Positions 127, 131, and 134 each coordinate [4Fe-4S] cluster. S-adenosyl-L-methionine-binding positions include 174-175, S204, 227-229, and N303; these read GE and SLH. C346 serves as the catalytic S-methylcysteine intermediate.

The protein belongs to the radical SAM superfamily. RlmN family. Requires [4Fe-4S] cluster as cofactor.

Its subcellular location is the cytoplasm. It catalyses the reaction adenosine(2503) in 23S rRNA + 2 reduced [2Fe-2S]-[ferredoxin] + 2 S-adenosyl-L-methionine = 2-methyladenosine(2503) in 23S rRNA + 5'-deoxyadenosine + L-methionine + 2 oxidized [2Fe-2S]-[ferredoxin] + S-adenosyl-L-homocysteine. The enzyme catalyses adenosine(37) in tRNA + 2 reduced [2Fe-2S]-[ferredoxin] + 2 S-adenosyl-L-methionine = 2-methyladenosine(37) in tRNA + 5'-deoxyadenosine + L-methionine + 2 oxidized [2Fe-2S]-[ferredoxin] + S-adenosyl-L-homocysteine. Its function is as follows. Specifically methylates position 2 of adenine 2503 in 23S rRNA and position 2 of adenine 37 in tRNAs. This is Probable dual-specificity RNA methyltransferase RlmN from Nostoc sp. (strain PCC 7120 / SAG 25.82 / UTEX 2576).